A 214-amino-acid polypeptide reads, in one-letter code: Probable GTP-binding protein EngB (214 aa).

One can recognise an EngB-type G domain in the interval 40–212 (SLPEIVFVGK…KASFAQCIKH (173 aa)). Residues 48 to 55 (GKSNVGKS), 75 to 79 (GRTRQ), 93 to 96 (DLPG), 160 to 163 (TKSD), and 191 to 193 (VSS) contribute to the GTP site. 2 residues coordinate Mg(2+): S55 and T77.

It belongs to the TRAFAC class TrmE-Era-EngA-EngB-Septin-like GTPase superfamily. EngB GTPase family. The cofactor is Mg(2+).

Its function is as follows. Necessary for normal cell division and for the maintenance of normal septation. In Rickettsia prowazekii (strain Madrid E), this protein is Probable GTP-binding protein EngB.